The sequence spans 249 residues: Probable transcriptional regulatory protein A1S_1496 (249 aa).

It belongs to the TACO1 family.

Its subcellular location is the cytoplasm. The chain is Probable transcriptional regulatory protein A1S_1496 from Acinetobacter baumannii (strain ATCC 17978 / DSM 105126 / CIP 53.77 / LMG 1025 / NCDC KC755 / 5377).